Here is a 156-residue protein sequence, read N- to C-terminus: Ribonuclease pancreatic (156 aa).

The N-terminal stretch at 1 to 28 (MALEKSLALLPLLVLVLLVLGWVQPSLG) is a signal peptide. The span at 33–43 (AKKFQRQHMDS) shows a compositional bias: basic and acidic residues. A disordered region spans residues 33 to 52 (AKKFQRQHMDSDGSPSSNPT). Lys-35 and Arg-38 together coordinate substrate. Catalysis depends on His-40, which acts as the Proton acceptor. 4 cysteine pairs are disulfide-bonded: Cys-54/Cys-112, Cys-68/Cys-123, Cys-86/Cys-138, and Cys-93/Cys-100. An N-linked (GlcNAc...) asparagine glycan is attached at Asn-62. Substrate-binding positions include 69–73 (KPVNT), Lys-94, and Arg-113. Asn-116 carries N-linked (GlcNAc...) asparagine glycosylation. Residue His-147 is the Proton donor of the active site.

The protein belongs to the pancreatic ribonuclease family. As to quaternary structure, monomer. Interacts with and forms tight 1:1 complexes with RNH1. Dimerization of two such complexes may occur. Interaction with RNH1 inhibits this protein.

The protein localises to the secreted. The catalysed reaction is an [RNA] containing cytidine + H2O = an [RNA]-3'-cytidine-3'-phosphate + a 5'-hydroxy-ribonucleotide-3'-[RNA].. It catalyses the reaction an [RNA] containing uridine + H2O = an [RNA]-3'-uridine-3'-phosphate + a 5'-hydroxy-ribonucleotide-3'-[RNA].. Endonuclease that catalyzes the cleavage of RNA on the 3' side of pyrimidine nucleotides. Acts on single-stranded and double-stranded RNA. In Saimiri sciureus (Common squirrel monkey), this protein is Ribonuclease pancreatic (RNASE1).